The following is a 407-amino-acid chain: Serpin-Z2 (407 aa).

A disordered region spans residues 1–28; the sequence is MDSKRKNQELSTSETADPSLSKTNKKQK. Polar residues predominate over residues 9-22; that stretch reads ELSTSETADPSLSK. The segment at 344 to 368 is RCL; that stretch reads GTEAAAATTVVVVTGSCLWEPKKKI.

The protein belongs to the serpin family.

Its function is as follows. Probable serine protease inhibitor. The polypeptide is Serpin-Z2 (Arabidopsis thaliana (Mouse-ear cress)).